We begin with the raw amino-acid sequence, 355 residues long: Tetraacyldisaccharide 4'-kinase (355 aa).

Position 49–56 (49–56 (SAGGTGKT)) interacts with ATP.

Belongs to the LpxK family.

The enzyme catalyses a lipid A disaccharide + ATP = a lipid IVA + ADP + H(+). It functions in the pathway glycolipid biosynthesis; lipid IV(A) biosynthesis; lipid IV(A) from (3R)-3-hydroxytetradecanoyl-[acyl-carrier-protein] and UDP-N-acetyl-alpha-D-glucosamine: step 6/6. In terms of biological role, transfers the gamma-phosphate of ATP to the 4'-position of a tetraacyldisaccharide 1-phosphate intermediate (termed DS-1-P) to form tetraacyldisaccharide 1,4'-bis-phosphate (lipid IVA). This is Tetraacyldisaccharide 4'-kinase from Chlorobium phaeobacteroides (strain DSM 266 / SMG 266 / 2430).